Consider the following 107-residue polypeptide: U1-lycotoxin-Ls1d (107 aa).

An N-terminal signal peptide occupies residues 1-20 (MMKVLVVVALLVTLISYSSS). Residues 21–41 (EGIDDLEADELLSLMANEQTR) constitute a propeptide that is removed on maturation. Intrachain disulfides connect C44–C59, C51–C68, C58–C86, and C70–C84.

The protein belongs to the neurotoxin 19 (CSTX) family. 04 (U1-Lctx) subfamily. Expressed by the venom gland.

It is found in the secreted. This chain is U1-lycotoxin-Ls1d, found in Lycosa singoriensis (Wolf spider).